A 224-amino-acid polypeptide reads, in one-letter code: tRNA (guanine-N(7)-)-methyltransferase (224 aa).

Residues Glu57, Asp82, and Asp109 each coordinate S-adenosyl-L-methionine. Substrate is bound at residue Asp167.

The protein belongs to the class I-like SAM-binding methyltransferase superfamily. TrmB family.

It catalyses the reaction guanosine(46) in tRNA + S-adenosyl-L-methionine = N(7)-methylguanosine(46) in tRNA + S-adenosyl-L-homocysteine. Its pathway is tRNA modification; N(7)-methylguanine-tRNA biosynthesis. In terms of biological role, catalyzes the formation of N(7)-methylguanine at position 46 (m7G46) in tRNA. The polypeptide is tRNA (guanine-N(7)-)-methyltransferase (Chloroflexus aggregans (strain MD-66 / DSM 9485)).